The following is a 101-amino-acid chain: Large ribosomal subunit protein P1 (101 aa).

Residues 61–72 (AAPAAAAAPAAA) are compositionally biased toward low complexity. Positions 61–101 (AAPAAAAAPAAAEEAEEEAEEEEEEEEAEEEAAAGLGALFG) are disordered. Acidic residues predominate over residues 73–92 (EEAEEEAEEEEEEEEAEEEA).

The protein belongs to the eukaryotic ribosomal protein P1/P2 family. In terms of assembly, part of the 50S ribosomal subunit. Homodimer, it forms part of the ribosomal stalk which helps the ribosome interact with GTP-bound translation factors. Forms a heptameric uL10/P0(P1)2(P1)2(P1)2 complex, where uL10/P0 forms an elongated spine to which the P1 dimers bind in a sequential fashion.

In terms of biological role, forms part of the ribosomal stalk, playing a central role in the interaction of the ribosome with GTP-bound translation factors. The chain is Large ribosomal subunit protein P1 from Methanothermobacter thermautotrophicus (strain ATCC 29096 / DSM 1053 / JCM 10044 / NBRC 100330 / Delta H) (Methanobacterium thermoautotrophicum).